We begin with the raw amino-acid sequence, 48 residues long: Palustrin-3a (48 aa).

An intrachain disulfide couples C43 to C48.

Expressed by the skin glands.

The protein resides in the secreted. Its function is as follows. Antimicrobial activity against Gram-negative bacterium E.coli. This Lithobates palustris (Pickerel frog) protein is Palustrin-3a.